A 1025-amino-acid chain; its full sequence is Serine/threonine-protein kinase TAO2 (1025 aa).

A Protein kinase domain is found at 28 to 281 (FADLREIGHG…SDMLLKHRFL (254 aa)). ATP is bound by residues 34–42 (IGHGSFGAV) and Lys-57. Asp-151 serves as the catalytic Proton acceptor. Positions 349–373 (ESSQSVPSMSISASSQSSSVNSLAD) are enriched in low complexity. The segment at 349-377 (ESSQSVPSMSISASSQSSSVNSLADASDD) is disordered. 2 coiled-coil regions span residues 457–650 (SALR…ECAM) and 755–876 (ILKR…EIEA). 2 disordered regions span residues 899-930 (FNQG…QNTG) and 945-1025 (SASW…LSYS). Pro residues predominate over residues 905–914 (APPPGWPSRP). Low complexity predominate over residues 947-986 (SWGLHPPGSSSSLSALPSSSSSSSSSPSSSSGGRPGLLLL). Polar residues predominate over residues 1007–1025 (SRSTSVTSQLSNGSHLSYS).

The protein belongs to the protein kinase superfamily. STE Ser/Thr protein kinase family. STE20 subfamily. It depends on Mg(2+) as a cofactor.

The enzyme catalyses L-seryl-[protein] + ATP = O-phospho-L-seryl-[protein] + ADP + H(+). It catalyses the reaction L-threonyl-[protein] + ATP = O-phospho-L-threonyl-[protein] + ADP + H(+). Its function is as follows. Serine/threonine-protein kinase involved in different processes such as apoptotic morphological changes, MAPK8/JNK and MAPK14/p38 MAPK signaling pathway. Activates the JNK MAP kinase pathway. This Xenopus laevis (African clawed frog) protein is Serine/threonine-protein kinase TAO2 (taok2).